A 153-amino-acid chain; its full sequence is Ribosomal RNA large subunit methyltransferase H (153 aa).

S-adenosyl-L-methionine is bound by residues Leu70, Gly102, and 121–126; that span reads LSRMTF.

It belongs to the RNA methyltransferase RlmH family. Homodimer.

The protein localises to the cytoplasm. The enzyme catalyses pseudouridine(1915) in 23S rRNA + S-adenosyl-L-methionine = N(3)-methylpseudouridine(1915) in 23S rRNA + S-adenosyl-L-homocysteine + H(+). Functionally, specifically methylates the pseudouridine at position 1915 (m3Psi1915) in 23S rRNA. This is Ribosomal RNA large subunit methyltransferase H from Geotalea daltonii (strain DSM 22248 / JCM 15807 / FRC-32) (Geobacter daltonii).